A 308-amino-acid chain; its full sequence is MGGGRWAAAGALLALAAGLLAAGSASEYDYVSFQSDIGAYQSGRFYTKPPQCVDIPADLRLCHNVGYKRMVLPNLLEHETMAEVKQQASSWVPLLNKNCHIGTQVFLCSLFAPVCLDRPIYPCRWLCEAVRDSCEPVMQFFGFYWPEMLKCDKFPEGDVCIAMTPPNATEASKPQGTTVCPPCDNELKSEAIIEHLCASEFALRMKIKEVKKENGDKKIVPKKKKPLKLGPIKKKELKKLVLYLKNGADCPCHQLDNLSHHFLIMGRKVKSQYLLTAIHKWDKKNKEFKTFMKKMKNHECPTFQSVFK.

Positions 1–25 (MGGGRWAAAGALLALAAGLLAAGSA) are cleaved as a signal peptide. Positions 47–163 (TKPPQCVDIP…FPEGDVCIAM (117 aa)) constitute an FZ domain. 5 disulfide bridges follow: C52/C115, C62/C108, C99/C134, C123/C160, and C127/C151. A glycan (N-linked (GlcNAc...) asparagine) is linked at N167. 3 disulfide bridges follow: C180–C250, C183–C252, and C197–C300. The 121-residue stretch at 180 to 300 (CPPCDNELKS…FMKKMKNHEC (121 aa)) folds into the NTR domain.

The protein belongs to the secreted frizzled-related protein (sFRP) family. In terms of assembly, interacts with WNT1, WNT2, WNT4, WNT8, MYOC and FRZD6. In terms of tissue distribution, highest levels in aortic endothelium, heart, spleen and eye. Lower levels in lung, brain and kidney. Weak expression in liver, skeletal muscle and the medial layer of the aorta. In the cortical brain, localized to neurons and small blood vessels. In the retina, localized to the inner and outer nuclear layers with high expression in the neuronal cell bodies. In the heart, restricted to myocytes. In lung, highest expression found in the epithelium of terminal bronchioles. In kidney, localized to the epithelium of collecting ducts of the medulla and, in spleen, expression restricted to the red pulp in cells associated with the sinuses.

It localises to the secreted. Functionally, soluble frizzled-related proteins (sFRPS) function as modulators of Wnt signaling through direct interaction with Wnts. They have a role in regulating cell growth and differentiation in specific cell types. SFRP1 decreases intracellular beta-catenin levels. Has antiproliferative effects on vascular cells, in vitro and in vivo, and can induce, in vivo, an angiogenic response. In vascular cell cycle, delays the G1 phase and entry into the S phase. In kidney development, inhibits tubule formation and bud growth in metanephroi. Inhibits WNT1/WNT4-mediated TCF-dependent transcription. This chain is Secreted frizzled-related protein 1 (SFRP1), found in Bos taurus (Bovine).